A 513-amino-acid polypeptide reads, in one-letter code: Maturase K (513 aa).

It belongs to the intron maturase 2 family. MatK subfamily.

Its subcellular location is the plastid. It localises to the chloroplast. Its function is as follows. Usually encoded in the trnK tRNA gene intron. Probably assists in splicing its own and other chloroplast group II introns. The sequence is that of Maturase K from Eleusine indica (Goosegrass).